The sequence spans 151 residues: Putative membrane protein ORF10 (151 aa).

Transmembrane regions (helical) follow at residues 7–23 (LCLA…GVVV) and 107–123 (GLVA…IIMY).

The protein resides in the membrane. In Ictalurid herpesvirus 1 (strain Auburn) (IcHV-1), this protein is Putative membrane protein ORF10 (ORF10).